Reading from the N-terminus, the 257-residue chain is Ubiquinone biosynthesis O-methyltransferase (257 aa).

Residues Arg43, Gly77, Asp98, and Met144 each contribute to the S-adenosyl-L-methionine site.

This sequence belongs to the methyltransferase superfamily. UbiG/COQ3 family.

The catalysed reaction is a 3-demethylubiquinol + S-adenosyl-L-methionine = a ubiquinol + S-adenosyl-L-homocysteine + H(+). It catalyses the reaction a 3-(all-trans-polyprenyl)benzene-1,2-diol + S-adenosyl-L-methionine = a 2-methoxy-6-(all-trans-polyprenyl)phenol + S-adenosyl-L-homocysteine + H(+). Its pathway is cofactor biosynthesis; ubiquinone biosynthesis. In terms of biological role, O-methyltransferase that catalyzes the 2 O-methylation steps in the ubiquinone biosynthetic pathway. This chain is Ubiquinone biosynthesis O-methyltransferase, found in Psychrobacter cryohalolentis (strain ATCC BAA-1226 / DSM 17306 / VKM B-2378 / K5).